The primary structure comprises 88 residues: Small ribosomal subunit protein uS15 (88 aa).

Positions Met-1–Ala-12 are enriched in polar residues. Residues Met-1–Ser-23 form a disordered region.

This sequence belongs to the universal ribosomal protein uS15 family. As to quaternary structure, part of the 30S ribosomal subunit. Forms a bridge to the 50S subunit in the 70S ribosome, contacting the 23S rRNA.

One of the primary rRNA binding proteins, it binds directly to 16S rRNA where it helps nucleate assembly of the platform of the 30S subunit by binding and bridging several RNA helices of the 16S rRNA. Functionally, forms an intersubunit bridge (bridge B4) with the 23S rRNA of the 50S subunit in the ribosome. The chain is Small ribosomal subunit protein uS15 from Psychrobacter sp. (strain PRwf-1).